The sequence spans 182 residues: MTEEHVVLLDEQDKPSGTLEKYAAHTLNTPLHLAFSCWLFNEDGQLLVTRRSLSKKAWPGVWTNSVCGHPQQGEAIEEAIIRRCRFELGVEITDLTPIYPHFSYRAIDPNGIVENEVCPVFAARATSVLQVNNEEVMDCQWSVLEDVLRGISATPWAFSPWMVMQASDDNARELLSEFANGN.

His-25 and His-32 together coordinate Mn(2+). In terms of domain architecture, Nudix hydrolase spans 30–164 (PLHLAFSCWL…PWAFSPWMVM (135 aa)). Cys-67 is a catalytic residue. His-69 is a binding site for Mn(2+). Glu-87 contributes to the Mg(2+) binding site. The Mn(2+) site is built by Glu-114 and Glu-116. Glu-116 is an active-site residue.

This sequence belongs to the IPP isomerase type 1 family. In terms of assembly, homodimer. Mg(2+) serves as cofactor. It depends on Mn(2+) as a cofactor.

It is found in the cytoplasm. It carries out the reaction isopentenyl diphosphate = dimethylallyl diphosphate. Its pathway is isoprenoid biosynthesis; dimethylallyl diphosphate biosynthesis; dimethylallyl diphosphate from isopentenyl diphosphate: step 1/1. In terms of biological role, catalyzes the 1,3-allylic rearrangement of the homoallylic substrate isopentenyl (IPP) to its highly electrophilic allylic isomer, dimethylallyl diphosphate (DMAPP). The sequence is that of Isopentenyl-diphosphate Delta-isomerase from Salmonella arizonae (strain ATCC BAA-731 / CDC346-86 / RSK2980).